Here is a 244-residue protein sequence, read N- to C-terminus: Multiple organellar RNA editing factor 3, mitochondrial (244 aa).

The transit peptide at 1–62 (MALISTRRTL…GPCYISTRPK (62 aa)) directs the protein to the mitochondrion. 2 disordered regions span residues 59 to 82 (TRPK…SNRP) and 196 to 244 (YRFT…KPSA). Residues 60–80 (RPKTSGSGYSPLNDPSPNWSN) show a composition bias toward polar residues. The segment covering 210 to 226 (PRYDRRRETMQVERREP) has biased composition (basic and acidic residues).

It belongs to the MORF family. Heterodimer with MORF1. Homodimer and heterodimers with MORF8/RIP1, MORF4/RIP4 and MORF5/RIP5.

The protein resides in the mitochondrion. In terms of biological role, involved in organellar RNA editing. Required for the processing of RNA editing sites in mitochondria. This chain is Multiple organellar RNA editing factor 3, mitochondrial, found in Arabidopsis thaliana (Mouse-ear cress).